The sequence spans 326 residues: F-box/LRR-repeat protein 12 (326 aa).

One can recognise an F-box domain in the interval 1-47 (MATLFDLPDLVLLEIFSYLPVRDRIRISRVCHRWKRLVDDRWLWRHV). LRR repeat units follow at residues 51–78 (LYTMRPKVMWHLLRRYMASRLYSLRMGG), 86–111 (APQLSPALMRALGQKCPNLKRLCLHV), 113–133 (DLSMVPITSLPSTLRTLELHS), 161–185 (VPAFRDEHLQGLTRFRALRSLVLGG), 186–211 (TYRVTETGLDASLQELSYLQRLEVLG), 212–236 (CTLSADSTLLAISRHLRDVRKIRLT), 237–261 (VGGLSAQGLVFLEGMPVLESLCFQG), and 266–291 (PDMPTPTQIVSSCLTMPKLRVLEVQG).

As to quaternary structure, interacts with SKP1 and CUL1.

It functions in the pathway protein modification; protein ubiquitination. Its function is as follows. Substrate-recognition component of the SCF (SKP1-CUL1-F-box protein)-type E3 ubiquitin ligase complex. Mediates the polyubiquitination and proteasomal degradation of CAMK1 leading to disruption of cyclin D1/CDK4 complex assembly which results in G1 cell cycle arrest in lung epithelia. The protein is F-box/LRR-repeat protein 12 (Fbxl12) of Mus musculus (Mouse).